A 152-amino-acid polypeptide reads, in one-letter code: UPF0266 membrane protein YobD (152 aa).

The next 3 helical transmembrane spans lie at 6-26 (LLLI…QFIM), 45-65 (VDSV…VTSH), and 67-87 (AQMT…IFWI).

It belongs to the UPF0266 family.

It localises to the cell inner membrane. This chain is UPF0266 membrane protein YobD, found in Salmonella paratyphi C (strain RKS4594).